We begin with the raw amino-acid sequence, 74 residues long: uncharacterized protein (74 aa).

The stretch at Leu29–Leu63 forms a coiled coil.

This is an uncharacterized protein from Pseudoalteromonas phage PM2 (Bacteriophage PM2).